Consider the following 415-residue polypeptide: Multidrug resistance protein MdtA (415 aa).

An N-terminal signal peptide occupies residues Met1–Ala21. Disordered regions lie at residues Ser32–Leu59 and Glu392–Ser415. The segment covering Ser399–Ser415 has biased composition (basic and acidic residues).

It belongs to the membrane fusion protein (MFP) (TC 8.A.1) family. Part of a tripartite efflux system composed of MdtA, MdtB and MdtC.

Its subcellular location is the cell inner membrane. The MdtABC tripartite complex confers resistance against novobiocin and deoxycholate. This chain is Multidrug resistance protein MdtA, found in Escherichia coli O17:K52:H18 (strain UMN026 / ExPEC).